The primary structure comprises 273 residues: Formamidopyrimidine-DNA glycosylase (273 aa).

Pro-2 acts as the Schiff-base intermediate with DNA in catalysis. Glu-3 acts as the Proton donor in catalysis. The Proton donor; for beta-elimination activity role is filled by Lys-58. Positions 92, 111, and 153 each coordinate DNA. The FPG-type zinc-finger motif lies at Arg-238 to Tyr-272. The Proton donor; for delta-elimination activity role is filled by Arg-262.

This sequence belongs to the FPG family. As to quaternary structure, monomer. Zn(2+) serves as cofactor.

It catalyses the reaction Hydrolysis of DNA containing ring-opened 7-methylguanine residues, releasing 2,6-diamino-4-hydroxy-5-(N-methyl)formamidopyrimidine.. The catalysed reaction is 2'-deoxyribonucleotide-(2'-deoxyribose 5'-phosphate)-2'-deoxyribonucleotide-DNA = a 3'-end 2'-deoxyribonucleotide-(2,3-dehydro-2,3-deoxyribose 5'-phosphate)-DNA + a 5'-end 5'-phospho-2'-deoxyribonucleoside-DNA + H(+). In terms of biological role, involved in base excision repair of DNA damaged by oxidation or by mutagenic agents. Acts as a DNA glycosylase that recognizes and removes damaged bases. Has a preference for oxidized purines, such as 7,8-dihydro-8-oxoguanine (8-oxoG). Has AP (apurinic/apyrimidinic) lyase activity and introduces nicks in the DNA strand. Cleaves the DNA backbone by beta-delta elimination to generate a single-strand break at the site of the removed base with both 3'- and 5'-phosphates. The protein is Formamidopyrimidine-DNA glycosylase of Rickettsia canadensis (strain McKiel).